The chain runs to 503 residues: Pre-glycoprotein polyprotein GP complex (503 aa).

Glycine 2 is lipidated: N-myristoyl glycine; by host. The Extracellular portion of the chain corresponds to 2–17; that stretch reads GQIVTLIQSIPEVLQE. A helical transmembrane segment spans residues 18 to 33; sequence VFNVALIIVSVLCIVK. The Cytoplasmic portion of the chain corresponds to 34–58; sequence GFVNLMRCGLFQLVTFLILSGRSCD. Cysteine 57 is a binding site for Zn(2+). The Extracellular portion of the chain corresponds to 59–446; that stretch reads SMMIDRRHNL…QGKTPLALTD (388 aa). 4 disulfide bridges follow: cysteine 86–cysteine 248, cysteine 293–cysteine 306, cysteine 315–cysteine 324, and cysteine 378–cysteine 399. N-linked (GlcNAc...) asparagine; by host glycans are attached at residues asparagine 89, asparagine 111, asparagine 181, and asparagine 241. N-linked (GlcNAc...) asparagine; by host glycans are attached at residues asparagine 379, asparagine 387, asparagine 404, and asparagine 409. A helical transmembrane segment spans residues 447–467; it reads ICFWSLVFYTITVFLHIVGIP. At 468–503 the chain is on the cytoplasmic side; that stretch reads THRHIIGDGCPKPHRITRNSLCSCGYYKYQRNLTNG. Residues histidine 469, histidine 471, cysteine 477, histidine 481, cysteine 489, and cysteine 491 each contribute to the Zn(2+) site.

Belongs to the arenaviridae GPC protein family. In terms of assembly, interacts with glycoprotein G2. Part of the GP complex (GP-C) together with glycoprotein G1 and glycoprotein G2. The GP-complex interacts with protein Z, which interacts with ribonucleocapsid; these interactions may induce virion budding. As to quaternary structure, homotrimer; disulfide-linked. In pre-fusion state, G1 homotrimers bind G2 homotrimers via ionic interactions. Part of the GP complex (GP-C) together with glycoprotein G2 and the stable signal peptide. The GP-complex interacts with protein Z, which interacts with ribonucleocapsid; these interactions may induce virion budding. Homotrimer. Interacts with the stable signal peptide. In pre-fusion state, G2 homotrimers bind G1 homotrimers via ionic interactions. Part of the GP complex (GP-C) together with glycoprotein G1 and the stable signal peptide. Acidification in the endosome triggers rearrangements, which ultimately leads to a 6 helix bundle formed by the two heptad repeat domains (HR1 and HR2) in post-fusion state. The GP-complex interacts with protein Z, which interacts with ribonucleocapsid; these interactions may induce virion budding. Post-translationally, specific enzymatic cleavages in vivo yield mature proteins. GP-C polyprotein is cleaved in the endoplasmic reticulum by the host protease MBTPS1. Only cleaved glycoprotein is incorporated into virions. The SSP remains stably associated with the GP complex following cleavage by signal peptidase and plays crucial roles in the trafficking of GP through the secretory pathway. In terms of processing, myristoylation is necessary for GP2-mediated fusion activity.

The protein resides in the virion membrane. The protein localises to the host endoplasmic reticulum membrane. Its subcellular location is the host Golgi apparatus membrane. It is found in the host cell membrane. Functions as a cleaved signal peptide that is retained as the third component of the GP complex (GP-C). Helps to stabilize the spike complex in its native conformation. The SSP is required for efficient glycoprotein expression, post-translational maturation cleavage of G1 and G2, glycoprotein transport to the cell surface plasma membrane, formation of infectious virus particles, and acid pH-dependent glycoprotein-mediated cell fusion. In terms of biological role, forms the virion spikes together with glycoprotein G2. The glycoprotein spike trimers are connected to the underlying matrix. Interacts with the host receptor leading to virus endocytosis. Functionally, forms the virion spikes together with glycoprotein G1. The glycoprotein spike trimers are connected to the underlying matrix. Class I viral fusion protein that directs fusion of viral and host endosomal membranes, leading to delivery of the nucleocapsid into the cytoplasm. Membrane fusion is mediated by irreversible conformational changes induced by acidification. This chain is Pre-glycoprotein polyprotein GP complex, found in Cavia cutleri (Guinea pig).